We begin with the raw amino-acid sequence, 138 residues long: von Willebrand factor C domain-containing protein 2-like (138 aa).

A signal peptide spans 1–21 (MALHIHEACILLLVIPGLVTS). The VWFC domain occupies 51-110 (KGCVDDSGFVYKLGERFFPGHSNCPCVCALDGPVCDQPECPKIHPKCTKVEHNGCCPECK).

In terms of assembly, peripherally associated with AMPAR complex. AMPAR complex consists of an inner core made of 4 pore-forming GluA/GRIA proteins (GRIA1, GRIA2, GRIA3 and GRIA4) and 4 major auxiliary subunits arranged in a twofold symmetry. One of the two pairs of distinct binding sites is occupied either by CNIH2, CNIH3 or CACNG2, CACNG3. The other harbors CACNG2, CACNG3, CACNG4, CACNG8 or GSG1L. This inner core of AMPAR complex is complemented by outer core constituents binding directly to the GluA/GRIA proteins at sites distinct from the interaction sites of the inner core constituents. Outer core constituents include at least PRRT1, PRRT2, CKAMP44/SHISA9, FRRS1L and NRN1. The proteins of the inner and outer core serve as a platform for other, more peripherally associated AMPAR constituents, including VWC2L. Alone or in combination, these auxiliary subunits control the gating and pharmacology of the AMPAR complex and profoundly impact their biogenesis and protein processing.

The protein localises to the secreted. It is found in the synapse. Its function is as follows. May play a role in neurogenesis. May play a role in bone differentiation and matrix mineralization. The protein is von Willebrand factor C domain-containing protein 2-like (VWC2L) of Macaca fascicularis (Crab-eating macaque).